The primary structure comprises 440 residues: Glutamyl-tRNA reductase (440 aa).

Substrate-binding positions include 50-53, Ser109, 114-116, and Gln120; these read TCNR and EPQ. Cys51 acts as the Nucleophile in catalysis. 189-194 is an NADP(+) binding site; sequence GAGEMA.

This sequence belongs to the glutamyl-tRNA reductase family. In terms of assembly, homodimer.

It carries out the reaction (S)-4-amino-5-oxopentanoate + tRNA(Glu) + NADP(+) = L-glutamyl-tRNA(Glu) + NADPH + H(+). It functions in the pathway porphyrin-containing compound metabolism; protoporphyrin-IX biosynthesis; 5-aminolevulinate from L-glutamyl-tRNA(Glu): step 1/2. Functionally, catalyzes the NADPH-dependent reduction of glutamyl-tRNA(Glu) to glutamate 1-semialdehyde (GSA). The protein is Glutamyl-tRNA reductase of Nitratidesulfovibrio vulgaris (strain DP4) (Desulfovibrio vulgaris).